The primary structure comprises 501 residues: Aldehyde dehydrogenase 1A1 (501 aa).

S2 is modified (N-acetylserine). 2 positions are modified to N6-acetyllysine: K91 and K128. NAD(+)-binding positions include 167–170 (IPWN), 193–196 (KPAE), 226–227 (GP), and 246–247 (GS). K252 bears the N6-acetyllysine mark. E269 serves as the catalytic Proton acceptor. 269–271 (ELG) serves as a coordination point for NAD(+). Residue C303 is the Nucleophile of the active site. Residues 336–501 (LTPGVTQGPQ…VTVKISQKNS (166 aa)) form a mediates interaction with PRMT3 region. Phosphothreonine is present on T337. 349 to 353 (EQYDK) provides a ligand contact to NAD(+). An N6-acetyllysine mark is found at K353 and K367. 400–402 (EIF) is an NAD(+) binding site. K410 is subject to N6-acetyllysine. The residue at position 413 (S413) is a Phosphoserine. An N6-acetyllysine mark is found at K419, K435, and K495.

Belongs to the aldehyde dehydrogenase family. Homotetramer. Interacts with PRMT3; the interaction is direct, inhibits ALDH1A1 aldehyde dehydrogenase activity and is independent of the methyltransferase activity of PRMT3. Post-translationally, the N-terminus is blocked most probably by acetylation. In terms of tissue distribution, expressed by erythrocytes (at protein level).

The protein localises to the cytoplasm. It localises to the cytosol. It is found in the cell projection. The protein resides in the axon. It carries out the reaction an aldehyde + NAD(+) + H2O = a carboxylate + NADH + 2 H(+). The enzyme catalyses all-trans-retinal + NAD(+) + H2O = all-trans-retinoate + NADH + 2 H(+). It catalyses the reaction 9-cis-retinal + NAD(+) + H2O = 9-cis-retinoate + NADH + 2 H(+). The catalysed reaction is 11-cis-retinal + NAD(+) + H2O = 11-cis-retinoate + NADH + 2 H(+). It carries out the reaction 13-cis-retinal + NAD(+) + H2O = 13-cis-retinoate + NADH + 2 H(+). The enzyme catalyses 3-deoxyglucosone + NAD(+) + H2O = 2-dehydro-3-deoxy-D-gluconate + NADH + 2 H(+). It catalyses the reaction (E)-4-hydroxynon-2-enal + NAD(+) + H2O = (E)-4-hydroxynon-2-enoate + NADH + 2 H(+). The catalysed reaction is malonaldehyde + NAD(+) + H2O = 3-oxopropanoate + NADH + 2 H(+). It carries out the reaction hexanal + NAD(+) + H2O = hexanoate + NADH + 2 H(+). The enzyme catalyses propanal + NAD(+) + H2O = propanoate + NADH + 2 H(+). It catalyses the reaction acetaldehyde + NAD(+) + H2O = acetate + NADH + 2 H(+). The catalysed reaction is benzaldehyde + NAD(+) + H2O = benzoate + NADH + 2 H(+). It carries out the reaction 4-aminobutanal + NAD(+) + H2O = 4-aminobutanoate + NADH + 2 H(+). It functions in the pathway cofactor metabolism; retinol metabolism. With respect to regulation, inhibited by citral, disulfiram, and cyanamide. Activated by diethylstilbestrol. Inhibited by duocarmycin analogs. Cytosolic dehydrogenase that catalyzes the irreversible oxidation of a wide range of aldehydes to their corresponding carboxylic acid. Functions downstream of retinol dehydrogenases and catalyzes the oxidation of retinaldehyde into retinoic acid, the second step in the oxidation of retinol/vitamin A into retinoic acid. This pathway is crucial to control the levels of retinol and retinoic acid, two important molecules which excess can be teratogenic and cytotoxic. Also oxidizes aldehydes resulting from lipid peroxidation like (E)-4-hydroxynon-2-enal/HNE, malonaldehyde and hexanal that form protein adducts and are highly cytotoxic. By participating for instance to the clearance of (E)-4-hydroxynon-2-enal/HNE in the lens epithelium prevents the formation of HNE-protein adducts and lens opacification. Also functions downstream of fructosamine-3-kinase in the fructosamine degradation pathway by catalyzing the oxidation of 3-deoxyglucosone, the carbohydrate product of fructosamine 3-phosphate decomposition, which is itself a potent glycating agent that may react with lysine and arginine side-chains of proteins. Also has an aminobutyraldehyde dehydrogenase activity and is probably part of an alternative pathway for the biosynthesis of GABA/4-aminobutanoate in midbrain, thereby playing a role in GABAergic synaptic transmission. This Homo sapiens (Human) protein is Aldehyde dehydrogenase 1A1.